The chain runs to 394 residues: uncharacterized protein (394 aa).

11 helical membrane-spanning segments follow: residues 10 to 30 (PALI…NYYA), 50 to 70 (FIVT…VPLG), 79 to 99 (IVSM…SQSL), 100 to 120 (AMMI…QILV), 138 to 158 (TIMS…GLLA), 166 to 186 (VFWV…RGLP), 218 to 238 (LLGC…AFLL), 243 to 263 (FNYS…GALG), 291 to 311 (WLAI…ILVL), 337 to 357 (LTAG…LISA), and 364 to 384 (GWAG…LVWW).

This sequence belongs to the major facilitator superfamily.

Its subcellular location is the cell inner membrane. This is an uncharacterized protein from Escherichia coli (strain K12).